A 167-amino-acid polypeptide reads, in one-letter code: Small ribosomal subunit protein uS5 (167 aa).

The region spanning 12–75 (IEDRVVAINR…ETARKSLIEV (64 aa)) is the S5 DRBM domain.

Belongs to the universal ribosomal protein uS5 family. In terms of assembly, part of the 30S ribosomal subunit. Contacts proteins S4 and S8.

In terms of biological role, with S4 and S12 plays an important role in translational accuracy. Located at the back of the 30S subunit body where it stabilizes the conformation of the head with respect to the body. The polypeptide is Small ribosomal subunit protein uS5 (Pediococcus pentosaceus (strain ATCC 25745 / CCUG 21536 / LMG 10740 / 183-1w)).